Here is a 143-residue protein sequence, read N- to C-terminus: 3-hydroxyacyl-[acyl-carrier-protein] dehydratase FabZ (143 aa).

H48 is an active-site residue.

Belongs to the thioester dehydratase family. FabZ subfamily.

Its subcellular location is the cytoplasm. It catalyses the reaction a (3R)-hydroxyacyl-[ACP] = a (2E)-enoyl-[ACP] + H2O. Functionally, involved in unsaturated fatty acids biosynthesis. Catalyzes the dehydration of short chain beta-hydroxyacyl-ACPs and long chain saturated and unsaturated beta-hydroxyacyl-ACPs. The polypeptide is 3-hydroxyacyl-[acyl-carrier-protein] dehydratase FabZ (Roseiflexus sp. (strain RS-1)).